Reading from the N-terminus, the 118-residue chain is UPF0295 protein BCE33L0445 (118 aa).

The next 2 membrane-spanning stretches (helical) occupy residues 12–32 and 43–63; these read IRTFALSLVFIGLFIAYLGVF and FMMVGFLAVIASTVVYFWIGM.

It belongs to the UPF0295 family.

It is found in the cell membrane. This chain is UPF0295 protein BCE33L0445, found in Bacillus cereus (strain ZK / E33L).